A 273-amino-acid polypeptide reads, in one-letter code: Dermonecrotic toxin LapSicTox-alphaIB1bi (273 aa).

The active site involves histidine 5. Positions 25 and 27 each coordinate Mg(2+). The active-site Nucleophile is the histidine 41. 2 cysteine pairs are disulfide-bonded: cysteine 45–cysteine 51 and cysteine 47–cysteine 190. A Mg(2+)-binding site is contributed by aspartate 85. Asparagine 189 and asparagine 250 each carry an N-linked (GlcNAc...) asparagine glycan.

The protein belongs to the arthropod phospholipase D family. Class II subfamily. Mg(2+) serves as cofactor. In terms of tissue distribution, expressed by the venom gland.

The protein localises to the secreted. It carries out the reaction an N-(acyl)-sphingosylphosphocholine = an N-(acyl)-sphingosyl-1,3-cyclic phosphate + choline. The enzyme catalyses an N-(acyl)-sphingosylphosphoethanolamine = an N-(acyl)-sphingosyl-1,3-cyclic phosphate + ethanolamine. The catalysed reaction is a 1-acyl-sn-glycero-3-phosphocholine = a 1-acyl-sn-glycero-2,3-cyclic phosphate + choline. It catalyses the reaction a 1-acyl-sn-glycero-3-phosphoethanolamine = a 1-acyl-sn-glycero-2,3-cyclic phosphate + ethanolamine. Dermonecrotic toxins cleave the phosphodiester linkage between the phosphate and headgroup of certain phospholipids (sphingolipid and lysolipid substrates), forming an alcohol (often choline) and a cyclic phosphate. This toxin acts on sphingomyelin (SM). It may also act on ceramide phosphoethanolamine (CPE), lysophosphatidylcholine (LPC) and lysophosphatidylethanolamine (LPE), but not on lysophosphatidylserine (LPS), and lysophosphatidylglycerol (LPG). It acts by transphosphatidylation, releasing exclusively cyclic phosphate products as second products. Induces dermonecrosis, hemolysis, increased vascular permeability, edema, inflammatory response, and platelet aggregation. The protein is Dermonecrotic toxin LapSicTox-alphaIB1bi of Loxosceles apachea (Apache recluse spider).